Here is a 210-residue protein sequence, read N- to C-terminus: Uridine kinase (210 aa).

12–19 (GGSGSGKT) is an ATP binding site.

This sequence belongs to the uridine kinase family.

The protein localises to the cytoplasm. It carries out the reaction uridine + ATP = UMP + ADP + H(+). It catalyses the reaction cytidine + ATP = CMP + ADP + H(+). The protein operates within pyrimidine metabolism; CTP biosynthesis via salvage pathway; CTP from cytidine: step 1/3. Its pathway is pyrimidine metabolism; UMP biosynthesis via salvage pathway; UMP from uridine: step 1/1. In Leuconostoc citreum (strain KM20), this protein is Uridine kinase.